The following is a 327-amino-acid chain: Glutaminase 1 (327 aa).

Residues Ser-74, Asn-126, Glu-170, Asn-177, Tyr-201, Tyr-253, and Val-271 each contribute to the substrate site.

The protein belongs to the glutaminase family. In terms of assembly, homotetramer.

It catalyses the reaction L-glutamine + H2O = L-glutamate + NH4(+). The sequence is that of Glutaminase 1 (glsA1) from Bacillus subtilis (strain 168).